We begin with the raw amino-acid sequence, 400 residues long: uncharacterized protein (400 aa).

36-43 (GSINSGKT) provides a ligand contact to ATP.

This sequence belongs to the archaeal ATPase family.

This is an uncharacterized protein from Methanocaldococcus jannaschii (strain ATCC 43067 / DSM 2661 / JAL-1 / JCM 10045 / NBRC 100440) (Methanococcus jannaschii).